A 118-amino-acid polypeptide reads, in one-letter code: Deoxynogalonate monooxygenase (118 aa).

An ABM domain is found at 14 to 100 (VTFVNRFTVH…ALSTSEHGLF (87 aa)).

In terms of assembly, homodimer.

The enzyme catalyses deoxynogalonate + O2 = nogalonate + H2O + H(+). It participates in antibiotic biosynthesis. In terms of biological role, involved in the biosynthesis of the anthracycline (aromatic polyketide) antibiotic nogalamycin. Catalyzes the oxygenation of 12-deoxy-nogalonic acid at position 12 to yield nogalonic acid. The polypeptide is Deoxynogalonate monooxygenase (Streptomyces nogalater).